Here is a 479-residue protein sequence, read N- to C-terminus: UPF0164 protein TP_0865 (479 aa).

An N-terminal signal peptide occupies residues 1 to 49; that stretch reads MVRMRRRRACSSGGACGCAAVRGARSFLSVRVLGMRIGMSALCLAPLFA.

The protein belongs to the UPF0164 family.

The polypeptide is UPF0164 protein TP_0865 (Treponema pallidum (strain Nichols)).